Consider the following 161-residue polypeptide: Putative ecotin-like protein (161 aa).

The signal sequence occupies residues 1-24 (MSLRPIETAIASLTMLMLQGCAHA).

The protein belongs to the protease inhibitor I11 (ecotin) family.

The chain is Putative ecotin-like protein from Methylobacillus flagellatus (strain ATCC 51484 / DSM 6875 / VKM B-1610 / KT).